A 129-amino-acid polypeptide reads, in one-letter code: Serum amyloid A-4 protein (129 aa).

The N-terminal stretch at Met-1–Gly-18 is a signal peptide. The segment covering Ala-107 to Arg-121 has biased composition (basic and acidic residues). The segment at Ala-107–Tyr-129 is disordered.

This sequence belongs to the SAA family. Apolipoprotein of the HDL complex.

It is found in the secreted. In terms of biological role, major acute phase reactant. This chain is Serum amyloid A-4 protein, found in Bos taurus (Bovine).